Here is a 540-residue protein sequence, read N- to C-terminus: Zinc metalloproteinase nas-10 (540 aa).

A Peptidase M12A domain is found at 293-500; the sequence is ASIFFEQNLI…VEILNKMYCK (208 aa). Disulfide bonds link cysteine 339–cysteine 499, cysteine 365–cysteine 385, cysteine 504–cysteine 540, cysteine 511–cysteine 533, and cysteine 520–cysteine 537. Histidine 394 provides a ligand contact to Zn(2+). Glutamate 395 is an active-site residue. Positions 398 and 404 each coordinate Zn(2+). The ShKT domain occupies 504–540; it reads CDDKNVYCGAWALQDLCNNPNHNVWMRSNCRKSCNFC.

Zn(2+) is required as a cofactor.

Metalloprotease. This chain is Zinc metalloproteinase nas-10, found in Caenorhabditis elegans.